The following is a 111-amino-acid chain: MAKFTNCLALCLLLAAVVGAFGVELSEADKSAVVNEIAEKMALQEMLDGVDKLFLRKMKSSETTLTMFLKEMQLKGLPVCGETCTLGTCYTQGCTCSWPICKRNGLPDVAA.

The N-terminal stretch at 1–28 (MAKFTNCLALCLLLAAVVGAFGVELSEA) is a signal peptide. The propeptide occupies 29–75 (DKSAVVNEIAEKMALQEMLDGVDKLFLRKMKSSETTLTMFLKEMQLK). The cyclopeptide (Gly-Asn) cross-link spans 76–104 (GLPVCGETCTLGTCYTQGCTCSWPICKRN). Cystine bridges form between Cys80/Cys94, Cys84/Cys96, and Cys89/Cys101. Positions 105 to 111 (GLPDVAA) are excised as a propeptide.

Post-translationally, kalata-B7 is a cyclic peptide.

Functionally, probably participates in a plant defense mechanism. Has hemolytic activity. This Oldenlandia affinis protein is Kalata-B7 (OAK3).